Consider the following 426-residue polypeptide: Glutamate-1-semialdehyde 2,1-aminomutase (426 aa).

An N6-(pyridoxal phosphate)lysine modification is found at Lys-265.

Belongs to the class-III pyridoxal-phosphate-dependent aminotransferase family. HemL subfamily. In terms of assembly, homodimer. Pyridoxal 5'-phosphate serves as cofactor.

The protein resides in the cytoplasm. The enzyme catalyses (S)-4-amino-5-oxopentanoate = 5-aminolevulinate. Its pathway is porphyrin-containing compound metabolism; protoporphyrin-IX biosynthesis; 5-aminolevulinate from L-glutamyl-tRNA(Glu): step 2/2. The chain is Glutamate-1-semialdehyde 2,1-aminomutase from Salmonella agona (strain SL483).